A 207-amino-acid chain; its full sequence is Testis-expressed protein 35 (207 aa).

Residues 43–79 (RKGMTRELKNELREVREQLTEKMEEIKQIKDIMDKDF) adopt a coiled-coil conformation.

Testis-specific. Expressed during spermatogenesis.

The protein localises to the nucleus. This Mus musculus (Mouse) protein is Testis-expressed protein 35 (Tex35).